Reading from the N-terminus, the 259-residue chain is Protein unc-50 homolog (259 aa).

The segment covering 1-15 has biased composition (polar residues); it reads MLPTSSPQIHRNGSL. Positions 1–22 are disordered; that stretch reads MLPTSSPQIHRNGSLSERDAAR. Topologically, residues 1 to 80 are cytoplasmic; the sequence is MLPTSSPQIH…TKDQWARDDP (80 aa). Residues 81-101 form a helical membrane-spanning segment; that stretch reads AFLVLLSIWLCVSTVGFGLVL. Over 102-110 the chain is Lumenal; the sequence is DMGFVETLT. The helical transmembrane segment at 111-131 threads the bilayer; sequence LLLWVVFIDCIGVGLLISTLM. The Cytoplasmic segment spans residues 132–162; that stretch reads WFVTNKYLMKHPNRDYDVEWGYAFDVHLNAF. The chain crosses the membrane as a helical span at residues 163–183; the sequence is YPLLVILHFLQLFFINHVVVI. Residues 184 to 198 lie on the Lumenal side of the membrane; that stretch reads SSDWFLGYFVGNTMW. A helical membrane pass occupies residues 199–219; it reads LIAIGYYVYITFLGYSALPFL. Residues 220–222 lie on the Cytoplasmic side of the membrane; that stretch reads KNT. A helical transmembrane segment spans residues 223 to 243; it reads VVLLYPFALLGLLYVLSISLG. At 244–259 the chain is on the lumenal side; it reads WNFTKGLCWFYKHRVQ.

Belongs to the unc-50 family.

The protein localises to the nucleus inner membrane. It is found in the golgi apparatus membrane. Functionally, involved in the cell surface expression of neuronal nicotinic receptors. Binds RNA. The protein is Protein unc-50 homolog (unc50) of Danio rerio (Zebrafish).